The sequence spans 406 residues: Putative phosphate permease PH0640 (406 aa).

A run of 11 helical transmembrane segments spans residues 2–22 (IPID…AWAI), 45–65 (AVLI…KTVT), 83–103 (VLIY…IIAT), 114–134 (SIIG…IVNW), 140–160 (VVLS…LVFR), 182–202 (FWIG…VLHG), 207–227 (IGIL…TSML), 265–285 (VANA…GLAG), 288–308 (VPVP…GVAT), 330–350 (FTID…GMPI), and 385–405 (FVTV…LLLI).

This sequence belongs to the inorganic phosphate transporter (PiT) (TC 2.A.20) family.

It is found in the cell membrane. Potential transporter for phosphate. In Pyrococcus horikoshii (strain ATCC 700860 / DSM 12428 / JCM 9974 / NBRC 100139 / OT-3), this protein is Putative phosphate permease PH0640.